Reading from the N-terminus, the 389-residue chain is Nicotinate phosphoribosyltransferase (389 aa).

Position 216 is a phosphohistidine; by autocatalysis (His216).

The protein belongs to the NAPRTase family. Post-translationally, transiently phosphorylated on a His residue during the reaction cycle. Phosphorylation strongly increases the affinity for substrates and increases the rate of nicotinate D-ribonucleotide production. Dephosphorylation regenerates the low-affinity form of the enzyme, leading to product release.

The catalysed reaction is nicotinate + 5-phospho-alpha-D-ribose 1-diphosphate + ATP + H2O = nicotinate beta-D-ribonucleotide + ADP + phosphate + diphosphate. Its pathway is cofactor biosynthesis; NAD(+) biosynthesis; nicotinate D-ribonucleotide from nicotinate: step 1/1. In terms of biological role, catalyzes the synthesis of beta-nicotinate D-ribonucleotide from nicotinate and 5-phospho-D-ribose 1-phosphate at the expense of ATP. This Ralstonia pickettii (strain 12J) protein is Nicotinate phosphoribosyltransferase.